Here is a 295-residue protein sequence, read N- to C-terminus: Protoheme IX farnesyltransferase 2 (295 aa).

The next 9 membrane-spanning stretches (helical) occupy residues 9-29, 36-56, 80-100, 108-128, 135-155, 163-183, 209-229, 230-250, and 265-285; these read ITKP…FFLA, LAVF…GCVF, LISL…GVAL, LAAL…SLYL, GTLV…VAVT, LTLL…IAIF, ILIY…SGYA, GMSY…MAWT, and FVFS…DFKV.

It belongs to the UbiA prenyltransferase family. Protoheme IX farnesyltransferase subfamily.

The protein localises to the cell inner membrane. It carries out the reaction heme b + (2E,6E)-farnesyl diphosphate + H2O = Fe(II)-heme o + diphosphate. It functions in the pathway porphyrin-containing compound metabolism; heme O biosynthesis; heme O from protoheme: step 1/1. Converts heme B (protoheme IX) to heme O by substitution of the vinyl group on carbon 2 of heme B porphyrin ring with a hydroxyethyl farnesyl side group. The protein is Protoheme IX farnesyltransferase 2 of Pseudomonas fluorescens (strain Pf0-1).